Reading from the N-terminus, the 405-residue chain is Glutathione S-transferase LANCL1 (405 aa).

Cys-282 contacts Zn(2+). Lys-323 lines the glutathione pocket. Residues Cys-328 and His-329 each coordinate Zn(2+). 370 to 373 lines the glutathione pocket; that stretch reads RTPD.

The protein belongs to the LanC-like protein family.

It localises to the cytoplasm. Its subcellular location is the cell membrane. It carries out the reaction RX + glutathione = an S-substituted glutathione + a halide anion + H(+). It catalyses the reaction 1-chloro-2,4-dinitrobenzene + glutathione = 2,4-dinitrophenyl-S-glutathione + chloride + H(+). Functionally, functions as a glutathione transferase. Catalyzes conjugation of the glutathione (GSH) to artificial substrates 1-chloro-2,4-dinitrobenzene (CDNB) and p-nitrophenyl acetate. Binds glutathione. This chain is Glutathione S-transferase LANCL1, found in Danio rerio (Zebrafish).